The chain runs to 60 residues: UPF0337 protein SAV1625 (60 aa).

Residues 18–41 (VGNVTDNKELEKEGQQDKATGKAK) are disordered. The span at 23–41 (DNKELEKEGQQDKATGKAK) shows a compositional bias: basic and acidic residues.

Belongs to the UPF0337 (CsbD) family.

The polypeptide is UPF0337 protein SAV1625 (Staphylococcus aureus (strain Mu50 / ATCC 700699)).